An 87-amino-acid polypeptide reads, in one-letter code: Small ribosomal subunit protein bS20 (87 aa).

Belongs to the bacterial ribosomal protein bS20 family.

Its function is as follows. Binds directly to 16S ribosomal RNA. The sequence is that of Small ribosomal subunit protein bS20 from Clostridium beijerinckii (strain ATCC 51743 / NCIMB 8052) (Clostridium acetobutylicum).